We begin with the raw amino-acid sequence, 257 residues long: Indole-3-glycerol phosphate synthase (257 aa).

Belongs to the TrpC family.

It carries out the reaction 1-(2-carboxyphenylamino)-1-deoxy-D-ribulose 5-phosphate + H(+) = (1S,2R)-1-C-(indol-3-yl)glycerol 3-phosphate + CO2 + H2O. It participates in amino-acid biosynthesis; L-tryptophan biosynthesis; L-tryptophan from chorismate: step 4/5. In Phenylobacterium zucineum (strain HLK1), this protein is Indole-3-glycerol phosphate synthase.